Reading from the N-terminus, the 55-residue chain is Beta-toxin Cn7 (55 aa).

Residues 1–55 (KEGYIVNYHDGCKYECYKLGDNDYCLRECKLRVGKGAGGYCYAFACWCTHLYEQA) enclose the LCN-type CS-alpha/beta domain. 3 cysteine pairs are disulfide-bonded: Cys16–Cys41, Cys25–Cys46, and Cys29–Cys48.

It belongs to the long (3 C-C) scorpion toxin superfamily. Sodium channel inhibitor family. Beta subfamily. Expressed by the venom gland.

The protein localises to the secreted. Functionally, beta toxins bind voltage-independently at site-4 of sodium channels (Nav) and shift the voltage of activation toward more negative potentials thereby affecting sodium channel activation and promoting spontaneous and repetitive firing. This Centruroides noxius (Mexican scorpion) protein is Beta-toxin Cn7.